The following is a 277-amino-acid chain: Digeranylgeranylglyceryl phosphate synthase (277 aa).

7 consecutive transmembrane segments (helical) span residues 16 to 36, 84 to 104, 107 to 127, 146 to 166, 200 to 220, 221 to 241, and 257 to 277; these read ILAG…IPDI, ALYY…FLNI, FVFA…LKPL, GAIG…AFLV, AIIA…PVKV, GIGL…KASI, and LKIA…TKGV.

It belongs to the UbiA prenyltransferase family. DGGGP synthase subfamily. The cofactor is Mg(2+).

Its subcellular location is the cell membrane. It carries out the reaction sn-3-O-(geranylgeranyl)glycerol 1-phosphate + (2E,6E,10E)-geranylgeranyl diphosphate = 2,3-bis-O-(geranylgeranyl)-sn-glycerol 1-phosphate + diphosphate. It functions in the pathway membrane lipid metabolism; glycerophospholipid metabolism. Prenyltransferase that catalyzes the transfer of the geranylgeranyl moiety of geranylgeranyl diphosphate (GGPP) to the C2 hydroxyl of (S)-3-O-geranylgeranylglyceryl phosphate (GGGP). This reaction is the second ether-bond-formation step in the biosynthesis of archaeal membrane lipids. The chain is Digeranylgeranylglyceryl phosphate synthase from Pyrococcus furiosus (strain ATCC 43587 / DSM 3638 / JCM 8422 / Vc1).